The following is a 630-amino-acid chain: Peptidyl-prolyl cis-trans isomerase cyp15 (630 aa).

The interval 1–46 is disordered; it reads MPEDSNTNDNNKRPLEDNNAVDGESDDDIGPMLPPPPGEDAPRKKK. 5 WD repeats span residues 70–108, 113–152, 157–198, 203–242, and 258–301; these read MHRDVLSQVAVTKKDFIITTSVDGHLKFWKKTASGIEFV, SHLSSIVDISISANHELLATISDDTTLKVYDITNFDMINM, YKPK…KPLH, MHSKPVHIIEFNSRFNCVVSVDAIGMIEYWSPEAPFALPD, and RKKK…REYD. The 155-residue stretch at 475–629 folds into the PPIase cyclophilin-type domain; that stretch reads LGTSAIIRTT…DDIKIINIDI (155 aa).

It belongs to the cyclophilin-type PPIase family.

It catalyses the reaction [protein]-peptidylproline (omega=180) = [protein]-peptidylproline (omega=0). Functionally, PPIases accelerate the folding of proteins. It catalyzes the cis-trans isomerization of proline imidic peptide bonds in oligopeptides. This is Peptidyl-prolyl cis-trans isomerase cyp15 (cyp15) from Rhizopus delemar (strain RA 99-880 / ATCC MYA-4621 / FGSC 9543 / NRRL 43880) (Mucormycosis agent).